Reading from the N-terminus, the 524-residue chain is Alkaline phosphatase, tissue-nonspecific isozyme (524 aa).

An N-terminal signal peptide occupies residues 1 to 17; it reads MISPFLLLAIGTCFASS. Asp60 serves as a coordination point for Mg(2+). Asp60 and Ser110 together coordinate Zn(2+). Ser110 (phosphoserine intermediate) is an active-site residue. Ser110 bears the Phosphoserine mark. The cysteines at positions 139 and 201 are disulfide-linked. An N-linked (GlcNAc...) asparagine glycan is attached at Asn140. Thr173 serves as a coordination point for Mg(2+). Residue Asn230 is glycosylated (N-linked (GlcNAc...) asparagine). Glu235 serves as a coordination point for Ca(2+). Asn271 carries an N-linked (GlcNAc...) asparagine glycan. Phe290 and Glu291 together coordinate Ca(2+). Asn303 carries an N-linked (GlcNAc...) asparagine glycan. Position 306 (Asp306) interacts with Ca(2+). Glu332 is a binding site for Mg(2+). The Zn(2+) site is built by Asp337, His341, Asp378, and His379. Asn430 is a glycosylation site (N-linked (GlcNAc...) asparagine). His454 provides a ligand contact to Zn(2+). Cysteines 489 and 497 form a disulfide. A lipid anchor (GPI-anchor amidated serine) is attached at Ser499. A propeptide spans 500 to 524 (removed in mature form); it reads ASSSGSPSPGPLLLLLALLPLGSLF.

The protein belongs to the alkaline phosphatase family. As to quaternary structure, homodimer. It depends on Mg(2+) as a cofactor. Requires Zn(2+) as cofactor. Ca(2+) serves as cofactor. Post-translationally, N-glycosylated.

Its subcellular location is the cell membrane. The protein resides in the extracellular vesicle membrane. It is found in the mitochondrion membrane. The protein localises to the mitochondrion intermembrane space. The catalysed reaction is a phosphate monoester + H2O = an alcohol + phosphate. It carries out the reaction diphosphate + H2O = 2 phosphate + H(+). It catalyses the reaction pyridoxal 5'-phosphate + H2O = pyridoxal + phosphate. The enzyme catalyses phosphoethanolamine + H2O = ethanolamine + phosphate. The catalysed reaction is N-phosphocreatine + H2O = creatine + phosphate. It carries out the reaction ATP + H2O = ADP + phosphate + H(+). It catalyses the reaction ADP + H2O = AMP + phosphate + H(+). The enzyme catalyses AMP + H2O = adenosine + phosphate. With respect to regulation, phosphatase activity is specifically inhibited by 5-((5-chloro-2-methoxyphenyl)sulfonamido)nicotinamide (SBI-425). Functionally, alkaline phosphatase that metabolizes various phosphate compounds and plays a key role in skeletal mineralization and adaptive thermogenesis. Has broad substrate specificity and can hydrolyze a considerable variety of compounds: however, only a few substrates, such as diphosphate (inorganic pyrophosphate; PPi), pyridoxal 5'-phosphate (PLP) and N-phosphocreatine are natural substrates. Plays an essential role in skeletal and dental mineralization via its ability to hydrolyze extracellular diphosphate, a potent mineralization inhibitor, to phosphate: it thereby promotes hydroxyapatite crystal formation and increases inorganic phosphate concentration. Acts in a non-redundant manner with PHOSPHO1 in skeletal mineralization: while PHOSPHO1 mediates the initiation of hydroxyapatite crystallization in the matrix vesicles (MVs), ALPL/TNAP catalyzes the spread of hydroxyapatite crystallization in the extracellular matrix. Also promotes dephosphorylation of osteopontin (SSP1), an inhibitor of hydroxyapatite crystallization in its phosphorylated state; it is however unclear whether ALPL/TNAP mediates SSP1 dephosphorylation via a direct or indirect manner. Catalyzes dephosphorylation of PLP to pyridoxal (PL), the transportable form of vitamin B6, in order to provide a sufficient amount of PLP in the brain, an essential cofactor for enzymes catalyzing the synthesis of diverse neurotransmitters. Additionally, also able to mediate ATP degradation in a stepwise manner to adenosine, thereby regulating the availability of ligands for purinergic receptors. Also capable of dephosphorylating microbial products, such as lipopolysaccharides (LPS) as well as other phosphorylated small-molecules, such as poly-inosine:cytosine (poly I:C). Acts as a key regulator of adaptive thermogenesis as part of the futile creatine cycle: localizes to the mitochondria of thermogenic fat cells and acts by mediating hydrolysis of N-phosphocreatine to initiate a futile cycle of creatine dephosphorylation and phosphorylation. During the futile creatine cycle, creatine and N-phosphocreatine are in a futile cycle, which dissipates the high energy charge of N-phosphocreatine as heat without performing any mechanical or chemical work. The sequence is that of Alkaline phosphatase, tissue-nonspecific isozyme (ALPL) from Bos taurus (Bovine).